The following is a 295-amino-acid chain: Bifunctional protein FolD (295 aa).

NADP(+) is bound by residues 166-168 (GRS), serine 195, and isoleucine 236.

Belongs to the tetrahydrofolate dehydrogenase/cyclohydrolase family. In terms of assembly, homodimer.

It catalyses the reaction (6R)-5,10-methylene-5,6,7,8-tetrahydrofolate + NADP(+) = (6R)-5,10-methenyltetrahydrofolate + NADPH. It carries out the reaction (6R)-5,10-methenyltetrahydrofolate + H2O = (6R)-10-formyltetrahydrofolate + H(+). It functions in the pathway one-carbon metabolism; tetrahydrofolate interconversion. Catalyzes the oxidation of 5,10-methylenetetrahydrofolate to 5,10-methenyltetrahydrofolate and then the hydrolysis of 5,10-methenyltetrahydrofolate to 10-formyltetrahydrofolate. This Prosthecochloris aestuarii (strain DSM 271 / SK 413) protein is Bifunctional protein FolD.